The following is a 284-amino-acid chain: Homeobox protein SIX1 (284 aa).

Positions 124–183 form a DNA-binding region, homeobox; it reads GEETSYCFKEKSRGVLREWYAHNPYPSPREKRELAEATGLTTTQVSNWFKNRRQRDRAAE. Residues 168–284 form a disordered region; sequence VSNWFKNRRQ…LTSSLVDLGS (117 aa). A compositionally biased stretch (basic and acidic residues) spans 179–190; that stretch reads DRAAEAKERENT. A compositionally biased stretch (polar residues) spans 227 to 284; that stretch reads DQNSVLLLQSNMGHARSSNYSLPGLTASQPSHGLQAHQHQLQDSLLGPLTSSLVDLGS.

Belongs to the SIX/Sine oculis homeobox family. Interacts with DACH1. Interacts with EYA1. Interacts with EYA2. Interacts with CDH1. Interacts with TBX18. Interacts with CEBPA. Interacts with CEBPB. Interacts with EBF2. Post-translationally, phosphorylated during interphase; becomes hyperphosphorylated during mitosis. Hyperphosphorylation impairs binding to promoter elements. In terms of processing, ubiquitinated by the anaphase promoting complex (APC), leading to its proteasomal degradation. Expressed in phalangeal tendons and in skeletal muscle and in head and body mesenchyme.

The protein resides in the nucleus. It is found in the cytoplasm. Functionally, transcription factor that is involved in the regulation of cell proliferation, apoptosis and embryonic development. Plays an important role in the development of several organs, including kidney, muscle and inner ear. Depending on context, functions as a transcriptional repressor or activator. Lacks an activation domain, and requires interaction with EYA family members for transcription activation. Mediates nuclear translocation of EYA1 and EYA2. Binds the 5'-TCA[AG][AG]TTNC-3' motif present in the MEF3 element in the MYOG promoter and CIDEA enhancer. Regulates the expression of numerous genes, including MYC, CCNA1, CCND1 and EZR. Acts as an activator of the IGFBP5 promoter, probably coactivated by EYA2. Repression of precursor cell proliferation in myoblasts is switched to activation through recruitment of EYA3 to the SIX1-DACH1 complex. During myogenesis, seems to act together with EYA2 and DACH2. Regulates the expression of CCNA1. Promotes brown adipocyte differentiation. This is Homeobox protein SIX1 (Six1) from Mus musculus (Mouse).